Reading from the N-terminus, the 171-residue chain is Large ribosomal subunit protein bL9 (171 aa).

This sequence belongs to the bacterial ribosomal protein bL9 family.

Functionally, binds to the 23S rRNA. The sequence is that of Large ribosomal subunit protein bL9 from Orientia tsutsugamushi (strain Ikeda) (Rickettsia tsutsugamushi).